The sequence spans 361 residues: CRISPR system associated protein Cas8 (361 aa).

In terms of assembly, monomer. Can form a Cascade complex with Csa5, Cas7, Cas5a, Cas3 and Cas3'.

CRISPR (clustered regularly interspaced short palindromic repeat) is an adaptive immune system that provides protection against mobile genetic elements (viruses, transposable elements and conjugative plasmids). CRISPR clusters contain sequences complementary to antecedent mobile elements and target invading nucleic acids. CRISPR clusters are transcribed and processed into CRISPR RNA (crRNA). In Thermoproteus tenax (strain ATCC 35583 / DSM 2078 / JCM 9277 / NBRC 100435 / Kra 1), this protein is CRISPR system associated protein Cas8 (cas8a2).